A 563-amino-acid polypeptide reads, in one-letter code: Phosphomethylpyrimidine synthase (563 aa).

A disordered region spans residues 95 to 115; it reads PGKNPSPMNNRTPVRAKQGKS. Substrate contacts are provided by residues asparagine 200, methionine 229, tyrosine 258, histidine 294, 314–316, 355–358, and glutamate 394; these read SRG and DALR. Zn(2+) is bound at residue histidine 398. Tyrosine 421 is a substrate binding site. Histidine 462 contributes to the Zn(2+) binding site. Positions 544, 547, and 552 each coordinate [4Fe-4S] cluster.

It belongs to the ThiC family. It depends on [4Fe-4S] cluster as a cofactor.

The catalysed reaction is 5-amino-1-(5-phospho-beta-D-ribosyl)imidazole + S-adenosyl-L-methionine = 4-amino-2-methyl-5-(phosphooxymethyl)pyrimidine + CO + 5'-deoxyadenosine + formate + L-methionine + 3 H(+). It participates in cofactor biosynthesis; thiamine diphosphate biosynthesis. Functionally, catalyzes the synthesis of the hydroxymethylpyrimidine phosphate (HMP-P) moiety of thiamine from aminoimidazole ribotide (AIR) in a radical S-adenosyl-L-methionine (SAM)-dependent reaction. This is Phosphomethylpyrimidine synthase from Chlorobium phaeobacteroides (strain BS1).